Consider the following 319-residue polypeptide: Thioredoxin reductase (319 aa).

37-44 (ERGVPGGQ) provides a ligand contact to FAD. The cysteines at positions 136 and 139 are disulfide-linked. 279 to 288 (DVRAKSLRQI) is a binding site for FAD.

This sequence belongs to the class-II pyridine nucleotide-disulfide oxidoreductase family. In terms of assembly, homodimer. FAD serves as cofactor.

The protein localises to the cytoplasm. The enzyme catalyses [thioredoxin]-dithiol + NADP(+) = [thioredoxin]-disulfide + NADPH + H(+). In Listeria monocytogenes serovar 1/2a (strain ATCC BAA-679 / EGD-e), this protein is Thioredoxin reductase (trxB).